The primary structure comprises 637 residues: DNA damage-binding protein CMR1 (637 aa).

Disordered regions lie at residues 1–91 (MIES…EEEA) and 144–168 (LVDTKDENKRRSANKPDPQFSTERR). Composition is skewed to basic and acidic residues over residues 8 to 23 (EQERLKNIRENERLMK) and 74 to 91 (AGHEADSETLKRKYEEEA). WD repeat units lie at residues 185-226 (VTPK…FASN), 255-295 (HARS…SEEI), 297-321 (AGEEDVLLSIFDVLSPSTHPSVYMD), 361-401 (VCEK…SVVK), and 431-470 (KARQACTSVDFSPRGDQLVGVSYDDVVKVWSMEPGSLFSE). Disordered stretches follow at residues 482–508 (SNKPKGAVKKQVPDSASDTGPGLLSWL) and 525–549 (KQEQDAPSPSLSKRPDDVLANPTRI). WD repeat units lie at residues 556–598 (GKWL…LRSL) and 602–637 (NLVTAVPAVTCMHPVLPARLVTGNASGRCTFWSPDP).

Belongs to the WD repeat DDB2/WDR76 family.

Functionally, DNA-binding protein that binds to both single- and double-stranded DNA. Binds preferentially to UV-damaged DNA. May be involved in DNA-metabolic processes. The chain is DNA damage-binding protein CMR1 from Mycosarcoma maydis (Corn smut fungus).